The following is a 548-amino-acid chain: Synaptic vesicle 2-related protein (548 aa).

At 1 to 87 (MEEDLFQLRQ…GFGKFQWKLS (87 aa)) the chain is on the cytoplasmic side. A phosphoserine mark is found at serine 25 and serine 31. A helical transmembrane segment spans residues 88-108 (VLTGLAWMADAMEMMILSILA). Residues 109 to 122 (PQLHCEWRLPSWQV) lie on the Vesicular side of the membrane. Residues 123–143 (ALLTSVVFVGMMSSSTLWGNI) form a helical membrane-spanning segment. Over 144-156 (SDQYGRKTGLKIS) the chain is Cytoplasmic. Residues 157–177 (VLWTLYYGILSAFAPVYSWIL) traverse the membrane as a helical segment. Residues 178 to 180 (VLR) lie on the Vesicular side of the membrane. A helical membrane pass occupies residues 181-201 (GLVGFGIGGVPQSVTLYAEFL). Residues 202-209 (PMKARAKC) are Cytoplasmic-facing. The chain crosses the membrane as a helical span at residues 210–230 (ILLIEVFWAIGTVFEVVLAVF). Residues 231–238 (VMPSLGWR) lie on the Vesicular side of the membrane. The helical transmembrane segment at 239-259 (WLLILSAVPLLLFAVLCFWLP) threads the bilayer. The Cytoplasmic portion of the chain corresponds to 260–316 (ESARYDVLSGNQEKAIATLKRIATENGAPMPLGKLIISRQEDRGKMRDLFTPHFRWT). A helical transmembrane segment spans residues 317-337 (TLLLWFIWFSNAFSYYGLVLL). At 338 to 373 (TTELFQAGDVCGISSRKKAVEAKCSLACEYLSEEDY) the chain is on the vesicular side. Residues 374-394 (MDLLWTTLSEFPGVLVTLWII) traverse the membrane as a helical segment. The Cytoplasmic portion of the chain corresponds to 395–401 (DRLGRKK). The helical transmembrane segment at 402–422 (TMALCFVIFSFCSLLLFICVG) threads the bilayer. Residues 423-424 (RN) lie on the Vesicular side of the membrane. A helical membrane pass occupies residues 425–445 (VLTLLLFIARAFISGGFQAAY). At 446 to 457 (VYTPEVYPTATR) the chain is on the cytoplasmic side. The helical transmembrane segment at 458 to 478 (ALGLGTCSGMARVGALITPFI) threads the bilayer. The Vesicular portion of the chain corresponds to 479–489 (AQVMLESSVYL). A helical transmembrane segment spans residues 490 to 510 (TLAVYSGCCLLAALASCFLPI). Over 511 to 548 (ETKGRGLQESSHREWGQEMVGRGMHGADVTRSNSGSQE) the chain is Cytoplasmic. Serine 542 is modified (phosphoserine).

It belongs to the major facilitator superfamily.

Its subcellular location is the cytoplasmic vesicle. It localises to the secretory vesicle. The protein resides in the synaptic vesicle membrane. In Pongo abelii (Sumatran orangutan), this protein is Synaptic vesicle 2-related protein (SVOP).